A 443-amino-acid polypeptide reads, in one-letter code: Delta(6)-fatty-acid desaturase fat-3 (443 aa).

In terms of domain architecture, Cytochrome b5 heme-binding spans M1–D71. The next 3 helical transmembrane spans lie at I136–L156, T296–L316, and V318–F338.

It belongs to the fatty acid desaturase type 1 family.

The protein resides in the membrane. It catalyses the reaction (9Z,12Z)-octadecadienoyl-CoA + 2 Fe(II)-[cytochrome b5] + O2 + 2 H(+) = (6Z,9Z,12Z)-octadecatrienoyl-CoA + 2 Fe(III)-[cytochrome b5] + 2 H2O. It carries out the reaction (9Z,12Z,15Z)-octadecatrienoyl-CoA + 2 Fe(II)-[cytochrome b5] + O2 + 2 H(+) = (6Z,9Z,12Z,15Z)-octadecatetraenoyl-CoA + 2 Fe(III)-[cytochrome b5] + 2 H2O. The protein operates within lipid metabolism; polyunsaturated fatty acid biosynthesis. Can function as a Delta(6) fatty acid desaturase. Introduces a double bond in the fatty acid chain 6 carbons away from carboxy terminal to biosynthesize polyunsaturated fatty acids (PUFAs) endogenously (PUFAs are essential for membrane structure and many cellular and physiological processes). Acts on a variety of substrates such as linoleoyl-CoA ((9Z,12Z)-octadecadienoyl-CoA, C18:2n-6) and alpha-linolenoyl-CoA ((9Z,12Z,15Z)-octadecatrienoyl-CoA, C18:3n-3) to produce gamma-linolenoyl-CoA ((6Z,9Z,12Z)-octadecatrienoyl-CoA, C18:3n-6) and (6Z,9Z,12Z,15Z)-octadecatetraenoyl-CoA (18:4n-3) respectively. Unlike plants, Caenorhabditis elegans desaturases seem to use fatty acyl-CoAs as substrates. Plays a role in synaptic vesicle recycling by regulating synaptojanin unc-26 localization at synapses. In Caenorhabditis elegans, this protein is Delta(6)-fatty-acid desaturase fat-3 (fat-3).